A 176-amino-acid polypeptide reads, in one-letter code: Large ribosomal subunit protein uL10 (176 aa).

This sequence belongs to the universal ribosomal protein uL10 family. Part of the ribosomal stalk of the 50S ribosomal subunit. The N-terminus interacts with L11 and the large rRNA to form the base of the stalk. The C-terminus forms an elongated spine to which L12 dimers bind in a sequential fashion forming a multimeric L10(L12)X complex.

Forms part of the ribosomal stalk, playing a central role in the interaction of the ribosome with GTP-bound translation factors. This chain is Large ribosomal subunit protein uL10, found in Marinobacter nauticus (strain ATCC 700491 / DSM 11845 / VT8) (Marinobacter aquaeolei).